The following is a 688-amino-acid chain: Methionine--tRNA ligase (688 aa).

A 'HIGH' region motif is present at residues 20–30 (PYANGSIHLGH). 4 residues coordinate Zn(2+): C151, C154, C164, and C167. The short motif at 337–341 (KMSKS) is the 'KMSKS' region element. K340 is an ATP binding site. One can recognise a tRNA-binding domain in the interval 587 to 688 (TFAQVDLRIA…EGAQPGMRVM (102 aa)).

Belongs to the class-I aminoacyl-tRNA synthetase family. MetG type 1 subfamily. Homodimer. Zn(2+) is required as a cofactor.

It is found in the cytoplasm. It carries out the reaction tRNA(Met) + L-methionine + ATP = L-methionyl-tRNA(Met) + AMP + diphosphate. Its function is as follows. Is required not only for elongation of protein synthesis but also for the initiation of all mRNA translation through initiator tRNA(fMet) aminoacylation. This is Methionine--tRNA ligase from Vibrio parahaemolyticus serotype O3:K6 (strain RIMD 2210633).